The following is an 82-amino-acid chain: DNA-directed RNA polymerase subunit Rpo5 (82 aa).

It belongs to the archaeal Rpo5/eukaryotic RPB5 RNA polymerase subunit family. As to quaternary structure, part of the RNA polymerase complex.

It is found in the cytoplasm. The enzyme catalyses RNA(n) + a ribonucleoside 5'-triphosphate = RNA(n+1) + diphosphate. DNA-dependent RNA polymerase (RNAP) catalyzes the transcription of DNA into RNA using the four ribonucleoside triphosphates as substrates. This is DNA-directed RNA polymerase subunit Rpo5 from Pyrococcus horikoshii (strain ATCC 700860 / DSM 12428 / JCM 9974 / NBRC 100139 / OT-3).